Consider the following 207-residue polypeptide: Hemin/hemoglobin-binding protein 1 (207 aa).

An N-terminal signal peptide occupies residues 1–27; sequence MKKVLVFAAFIVLFSFSFLSTGLTAQA. In terms of domain architecture, NEAT spans 29–148; that stretch reads LKDGTYSVDY…RFDEGSAKAL (120 aa). Residues 151–178 form a disordered region; that stretch reads AVKSSDNNTTTPATKSDSSNKVTNPKSS. A compositionally biased stretch (polar residues) spans 154–178; it reads SSDNNTTTPATKSDSSNKVTNPKSS. The NPKXZ sorting signal signature appears at 174 to 178; that stretch reads NPKSS. Ser177 bears the Murein peptidoglycan amidated serine mark. Residues 178–207 constitute a propeptide, removed by sortase B; sequence SDSSQMFLYGIIFVATGAGLILLKRRAIFK.

Its subcellular location is the secreted. The protein resides in the cell wall. Its function is as follows. Binds both host hemin and hemoglobin with affinity in the nanomolar range and presumably directs it to membrane transporters. This is Hemin/hemoglobin-binding protein 1 from Listeria monocytogenes serovar 1/2a (strain ATCC BAA-679 / EGD-e).